Here is a 200-residue protein sequence, read N- to C-terminus: dITP/XTP pyrophosphatase (200 aa).

Substrate is bound at residue 8–13; the sequence is THNPNK. Positions 41 and 71 each coordinate Mg(2+). Aspartate 71 acts as the Proton acceptor in catalysis. Residues threonine 72, 153–156, lysine 176, and 181–182 each bind substrate; these read FGYD and HR.

The protein belongs to the HAM1 NTPase family. As to quaternary structure, homodimer. Requires Mg(2+) as cofactor.

It catalyses the reaction XTP + H2O = XMP + diphosphate + H(+). The catalysed reaction is dITP + H2O = dIMP + diphosphate + H(+). The enzyme catalyses ITP + H2O = IMP + diphosphate + H(+). Functionally, pyrophosphatase that catalyzes the hydrolysis of nucleoside triphosphates to their monophosphate derivatives, with a high preference for the non-canonical purine nucleotides XTP (xanthosine triphosphate), dITP (deoxyinosine triphosphate) and ITP. Seems to function as a house-cleaning enzyme that removes non-canonical purine nucleotides from the nucleotide pool, thus preventing their incorporation into DNA/RNA and avoiding chromosomal lesions. This is dITP/XTP pyrophosphatase from Caldanaerobacter subterraneus subsp. tengcongensis (strain DSM 15242 / JCM 11007 / NBRC 100824 / MB4) (Thermoanaerobacter tengcongensis).